The following is a 240-amino-acid chain: Ribosomal RNA large subunit methyltransferase E (240 aa).

Residues 1–20 (MSKAGGNKGGVKTGGRGGAG) show a composition bias toward gly residues. Positions 1–27 (MSKAGGNKGGVKTGGRGGAGSSNLQVR) are disordered. S-adenosyl-L-methionine-binding residues include G92, W94, D115, D131, and D155. K195 (proton acceptor) is an active-site residue.

Belongs to the class I-like SAM-binding methyltransferase superfamily. RNA methyltransferase RlmE family.

Its subcellular location is the cytoplasm. It catalyses the reaction uridine(2552) in 23S rRNA + S-adenosyl-L-methionine = 2'-O-methyluridine(2552) in 23S rRNA + S-adenosyl-L-homocysteine + H(+). Specifically methylates the uridine in position 2552 of 23S rRNA at the 2'-O position of the ribose in the fully assembled 50S ribosomal subunit. The sequence is that of Ribosomal RNA large subunit methyltransferase E from Brucella anthropi (strain ATCC 49188 / DSM 6882 / CCUG 24695 / JCM 21032 / LMG 3331 / NBRC 15819 / NCTC 12168 / Alc 37) (Ochrobactrum anthropi).